The chain runs to 394 residues: Na(+)/H(+) antiporter NhaA (394 aa).

11 helical membrane passes run leucine 11–asparagine 31, leucine 59–valine 79, isoleucine 95–isoleucine 115, glycine 125–serine 145, phenylalanine 155–phenylalanine 175, histidine 177–methionine 197, threonine 203–leucine 220, alanine 254–valine 274, leucine 296–isoleucine 316, isoleucine 328–leucine 348, and leucine 365–threonine 385.

This sequence belongs to the NhaA Na(+)/H(+) (TC 2.A.33) antiporter family.

It is found in the cell inner membrane. The enzyme catalyses Na(+)(in) + 2 H(+)(out) = Na(+)(out) + 2 H(+)(in). Its function is as follows. Na(+)/H(+) antiporter that extrudes sodium in exchange for external protons. The chain is Na(+)/H(+) antiporter NhaA from Actinobacillus pleuropneumoniae serotype 7 (strain AP76).